Consider the following 473-residue polypeptide: Thermostable beta-glucosidase B (473 aa).

The active-site Proton donor is glutamate 196. Glutamate 378 acts as the Nucleophile in catalysis.

Belongs to the glycosyl hydrolase 1 family.

The protein resides in the cytoplasm. It catalyses the reaction Hydrolysis of terminal, non-reducing beta-D-glucosyl residues with release of beta-D-glucose.. This Thermobispora bispora (Microbispora bispora) protein is Thermostable beta-glucosidase B (bglB).